The chain runs to 628 residues: Leucine-rich repeat and fibronectin type-III domain-containing protein 3 (628 aa).

The N-terminal stretch at 1–16 (MAVLPLLLCLLPLAPA) is a signal peptide. The Extracellular segment spans residues 17–540 (SSPSQPATPS…APHAPFLGGT (524 aa)). In terms of domain architecture, LRRNT spans 19-59 (PSQPATPSPCPRRCRCQTQSLPLSVLCPGAGLLFVPPSLDR). LRR repeat units lie at residues 84–105 (GLLHLSLSRNTIRHVAAGAFAD), 108–129 (ALRALHLDGNRLTSLGEGQLRG), 132–153 (NLRHLILSNNQLAALAAGALDD), 157–178 (TLEDLDLSYNNLEQLPWEALGR), 181–202 (NVNTLGLDHNLLASVPAGAFSR), and 205–226 (KLARLDMTSNRLTTIPPDPLFS). The region spanning 249 to 295 (NPLHCNCELVWLRRLAREDDLEACASPPALGGRYFWAVGEEEFVCEP) is the LRRCT domain. Residues 295–382 (PPVVTHRSPP…GEATAAVELT (88 aa)) form the Ig-like domain. Residues C317 and C366 are joined by a disulfide bond. 2 N-linked (GlcNAc...) asparagine glycosylation sites follow: N348 and N393. The tract at residues 380 to 432 (ELTVGPPPPPQLANSTSCDPPRDGDPDALTPPSAASASAAAKAADTGPPTDRG) is disordered. A compositionally biased stretch (low complexity) spans 406–429 (DALTPPSAASASAAAKAADTGPPT). The Fibronectin type-III domain maps to 427 to 525 (PPTDRGVQVT…GCARFSTEPA (99 aa)). Residues 541-561 (MIIALGGVIVASVLVFIFVLL) form a helical membrane-spanning segment. The Cytoplasmic segment spans residues 562 to 628 (MRYKVHGGQP…WRPSHEPTGP (67 aa)). The interval 587 to 628 (QTNGSLGPTPAPPAPEPAAPRAHTVVQLDCEPWRPSHEPTGP) is disordered. Over residues 595–604 (TPAPPAPEPA) the composition is skewed to pro residues. Residues 617–628 (EPWRPSHEPTGP) are compositionally biased toward basic and acidic residues.

The protein belongs to the LRFN family. As to quaternary structure, can form heteromeric complexes with LRFN1, LRFN2, LRFN4 and LRFN5. Able to form homomeric complexes across cell junctions, between adjacent cells. Does not interact with DLG4. Post-translationally, N-glycosylated.

It is found in the cell membrane. The protein resides in the cell projection. Its subcellular location is the axon. The protein localises to the dendrite. It localises to the synapse. It is found in the presynaptic cell membrane. The protein resides in the postsynaptic cell membrane. In terms of biological role, cell adhesion molecule that mediates homophilic cell-cell adhesion in a Ca(2+)-independent manner. Promotes neurite outgrowth in hippocampal neurons. In Ailuropoda melanoleuca (Giant panda), this protein is Leucine-rich repeat and fibronectin type-III domain-containing protein 3 (LRFN3).